The primary structure comprises 314 residues: Ribosomal RNA small subunit methyltransferase H 2 (314 aa).

S-adenosyl-L-methionine contacts are provided by residues 33–35, Asp-53, Tyr-80, Asp-101, and Gln-108; that span reads AGH. The interval 293–314 is disordered; sequence KELEENSRSKSAKLRVFEKNDL.

The protein belongs to the methyltransferase superfamily. RsmH family.

It is found in the cytoplasm. It catalyses the reaction cytidine(1402) in 16S rRNA + S-adenosyl-L-methionine = N(4)-methylcytidine(1402) in 16S rRNA + S-adenosyl-L-homocysteine + H(+). Functionally, specifically methylates the N4 position of cytidine in position 1402 (C1402) of 16S rRNA. The sequence is that of Ribosomal RNA small subunit methyltransferase H 2 from Agathobacter rectalis (strain ATCC 33656 / DSM 3377 / JCM 17463 / KCTC 5835 / VPI 0990) (Eubacterium rectale).